Here is a 78-residue protein sequence, read N- to C-terminus: Exodeoxyribonuclease 7 small subunit (78 aa).

This sequence belongs to the XseB family. Heterooligomer composed of large and small subunits.

Its subcellular location is the cytoplasm. The enzyme catalyses Exonucleolytic cleavage in either 5'- to 3'- or 3'- to 5'-direction to yield nucleoside 5'-phosphates.. In terms of biological role, bidirectionally degrades single-stranded DNA into large acid-insoluble oligonucleotides, which are then degraded further into small acid-soluble oligonucleotides. The chain is Exodeoxyribonuclease 7 small subunit from Oceanobacillus iheyensis (strain DSM 14371 / CIP 107618 / JCM 11309 / KCTC 3954 / HTE831).